Reading from the N-terminus, the 106-residue chain is Large ribosomal subunit protein eL42 (106 aa).

This sequence belongs to the eukaryotic ribosomal protein eL42 family.

This Cyberlindnera jadinii (Torula yeast) protein is Large ribosomal subunit protein eL42 (RPL44).